The chain runs to 350 residues: MVFRIASSPYTHNQRQTSRIMMLVLIAALPGIATQLWFFGWGTLFQIILAAVSALAAEAAVLQLRKQPIAAILKDNSALLTGLLLAVSIPPLAPWWMVVLGTVFAVIIAKQLYGGLGQNPFNPAMIGYVVLLISFPVQMTSWLPPHDIAATAPGLLDALQVIFTGHTASGGDMNTLRMGIDGISQATPLDTFKTSLHAGHAVEQIMQYPIYSGMLAGAGWQWVNIAWLIGGVWLLWQKAIRWHIPVSFLVTLAVCSTLGWAFAGDSLASPQLHLLSGATMLGAFFILTDPVTASTTNRGRLIFGALAGLLVWLIRSFGGYPDGVAFAVLLANITVPLIDYYTRPRVYGHR.

Transmembrane regions (helical) follow at residues 20–40, 42–62, 68–88, 89–109, and 123–143; these read IMMLVLIAALPGIATQLWFFG, GTLFQIILAAVSALAAEAAVL, PIAAILKDNSALLTGLLLAVS, IPPLAPWWMVVLGTVFAVIIA, and PAMIGYVVLLISFPVQMTSWL. Position 187 is an FMN phosphoryl threonine (Thr187). The next 5 membrane-spanning stretches (helical) occupy residues 215–235, 244–264, 267–287, 301–321, and 322–342; these read LAGAGWQWVNIAWLIGGVWLL, IPVSFLVTLAVCSTLGWAFAG, LASPQLHLLSGATMLGAFFIL, LIFGALAGLLVWLIRSFGGYP, and DGVAFAVLLANITVPLIDYYT.

It belongs to the NqrB/RnfD family. In terms of assembly, the complex is composed of six subunits: RnfA, RnfB, RnfC, RnfD, RnfE and RnfG. FMN is required as a cofactor.

Its subcellular location is the cell inner membrane. In terms of biological role, part of a membrane-bound complex that couples electron transfer with translocation of ions across the membrane. The chain is Ion-translocating oxidoreductase complex subunit D from Citrobacter koseri (strain ATCC BAA-895 / CDC 4225-83 / SGSC4696).